We begin with the raw amino-acid sequence, 211 residues long: MSSEQGNGSNPSTSPEVEGTKTIPFRRRLQRGQRVFAPKLMEALRRSRVSSEEAPVRHLSRRWRATTAQKVYSLKLYDALQRSRRSATVRDTADKVLATTARGATRWSRAILVSRFGTSLRRRRNTKPASALAAAIRGSGGSGRRRKLSAVGNRVRVLGGLVPGCRRTALPELLDETADYIAALEMQVRAMTALSKILSELQPSTNLGSAL.

A compositionally biased stretch (polar residues) spans 1 to 15 (MSSEQGNGSNPSTSP). Positions 1-23 (MSSEQGNGSNPSTSPEVEGTKTI) are disordered. One can recognise a bHLH domain in the interval 135–184 (AIRGSGGSGRRRKLSAVGNRVRVLGGLVPGCRRTALPELLDETADYIAAL).

As to quaternary structure, homodimer. Interacts with PRE3 and ASK7. Phosphorylated by ASK7.

Its subcellular location is the nucleus. Atypical bHLH transcription factor probably unable to bind DNA. Negatively regulates brassinosteroid signaling. In Arabidopsis thaliana (Mouse-ear cress), this protein is Transcription factor bHLH150 (BHLH150).